The following is a 267-amino-acid chain: MAVISMKQLLEAGVHFGHQTRRWNPKMKQYIFTERNGIYIIDLQKTVKLIDAAYNYMKDEAAKGAVVLFVGTKKQAQDSIEEEATRAGQYYVNHRWLGGTLTNWETIQTRIKRLKSLKKMATDGTFDVLPKKEVSLLKKSQDKLERFLGGIEDMPKLPDVMFIVDPRKEQIAVHEAQKLNIPIVAMVDTNTDPDEIDVVIPSNDDAIRAVRLITSKMADAIVEGRQGEDQVDEKTFEGQKSEAAEGDKKTADNSMEDIVNAVEGDNK.

The tract at residues Gly224–Lys267 is disordered. The segment covering Arg225 to Ala251 has biased composition (basic and acidic residues).

It belongs to the universal ribosomal protein uS2 family.

In Levilactobacillus brevis (strain ATCC 367 / BCRC 12310 / CIP 105137 / JCM 1170 / LMG 11437 / NCIMB 947 / NCTC 947) (Lactobacillus brevis), this protein is Small ribosomal subunit protein uS2.